Consider the following 510-residue polypeptide: Serine/threonine protein phosphatase 2A 57 kDa regulatory subunit B' kappa isoform (510 aa).

The segment at 1–51 (MWKGFLSKLPRKTSASGRGADLDSGQCSNGAGNGNPIQRTSSCGSIPSGRS) is disordered. Over residues 25–51 (GQCSNGAGNGNPIQRTSSCGSIPSGRS) the composition is skewed to polar residues. Threonine 476 and threonine 493 each carry phosphothreonine. Serine 502 is subject to Phosphoserine. Threonine 508 is modified (phosphothreonine).

The protein belongs to the phosphatase 2A regulatory subunit B56 family. In terms of assembly, PP2A consists of a common heteromeric enzyme, composed of a catalytic subunit (subunits C), a constant regulatory subunit (subunit A), and a variety of regulatory subunits such as subunits B (the R2/B/PR55/B55, R3/B''/PR72/PR130/PR59 and R5/B'/B56 families). Interacts with SIT1. Post-translationally, phosphorylated at Thr-476, Thr-493, Ser-502 and Thr-508 by SIT1. In terms of tissue distribution, expressed in root stele and epidermal cells.

It is found in the cytoplasm. Its subcellular location is the cytosol. The protein resides in the cell membrane. Functionally, b regulatory subunit of phosphatase 2A (PP2A) involved in salt stress response. Under salt stress conditions, required for the catalytic activity of PP2A and the dephosphorylation of SIT1, a negative regulator of salt tolerance. Dephosphorylation of SIT1 turns off salt-induced SIT1 activity directly, which has a positive effect on salt tolerance. The protein is Serine/threonine protein phosphatase 2A 57 kDa regulatory subunit B' kappa isoform of Oryza sativa subsp. japonica (Rice).